Reading from the N-terminus, the 464-residue chain is 3-isopropylmalate dehydratase large subunit (464 aa).

[4Fe-4S] cluster is bound by residues C337, C397, and C400.

Belongs to the aconitase/IPM isomerase family. LeuC type 1 subfamily. Heterodimer of LeuC and LeuD. It depends on [4Fe-4S] cluster as a cofactor.

The catalysed reaction is (2R,3S)-3-isopropylmalate = (2S)-2-isopropylmalate. It participates in amino-acid biosynthesis; L-leucine biosynthesis; L-leucine from 3-methyl-2-oxobutanoate: step 2/4. Its function is as follows. Catalyzes the isomerization between 2-isopropylmalate and 3-isopropylmalate, via the formation of 2-isopropylmaleate. The sequence is that of 3-isopropylmalate dehydratase large subunit from Bacillus anthracis (strain A0248).